A 49-amino-acid chain; its full sequence is Large ribosomal subunit protein bL33B (49 aa).

Belongs to the bacterial ribosomal protein bL33 family.

This is Large ribosomal subunit protein bL33B (rpmG2) from Staphylococcus epidermidis (strain ATCC 12228 / FDA PCI 1200).